Here is a 309-residue protein sequence, read N- to C-terminus: MESNQYGHVTVLLAEAVEALGVKADGLYIDGTFGRGGHSAEILKALGPQGRLLGIDKDPRARRTAMERFSGDDRFLFRQGSFADMASFVSELQWPGVDGVLLDLGVSSPQLDEAERGFSFMQDGPLDMRMDPDSGLSASEWVNTAKEEEISKVLWDLGEERFARRMAKAIVAARQTQPITRTLQLAEIVAAANPRWEKGKNPATRAFQAIRIFINRELDDLAQGLEQAFGVLKPGGRLTVISFHSLEDRMVKQYMRDIVRGPKTPKWLPVVDDAPPKAKLVGKKIRAGETEVVANVRARSAVMRVLEKC.

S-adenosyl-L-methionine-binding positions include Gly-36–His-38, Asp-56, Phe-82, Asp-103, and Gln-110.

The protein belongs to the methyltransferase superfamily. RsmH family.

It is found in the cytoplasm. The catalysed reaction is cytidine(1402) in 16S rRNA + S-adenosyl-L-methionine = N(4)-methylcytidine(1402) in 16S rRNA + S-adenosyl-L-homocysteine + H(+). Specifically methylates the N4 position of cytidine in position 1402 (C1402) of 16S rRNA. The sequence is that of Ribosomal RNA small subunit methyltransferase H from Hahella chejuensis (strain KCTC 2396).